The following is an 864-amino-acid chain: Protein translocase subunit SecA (864 aa).

ATP-binding positions include Q85, 103–107 (GEGKT), and D542.

The protein belongs to the SecA family. As to quaternary structure, monomer and homodimer. Part of the essential Sec protein translocation apparatus which comprises SecA, SecYEG and auxiliary proteins SecDF. Other proteins may also be involved.

The protein localises to the cell inner membrane. It is found in the cytoplasm. The catalysed reaction is ATP + H2O + cellular proteinSide 1 = ADP + phosphate + cellular proteinSide 2.. In terms of biological role, part of the Sec protein translocase complex. Interacts with the SecYEG preprotein conducting channel. Has a central role in coupling the hydrolysis of ATP to the transfer of proteins into and across the cell membrane, serving as an ATP-driven molecular motor driving the stepwise translocation of polypeptide chains across the membrane. This is Protein translocase subunit SecA from Fervidobacterium nodosum (strain ATCC 35602 / DSM 5306 / Rt17-B1).